Here is a 181-residue protein sequence, read N- to C-terminus: ADP-ribosylation factor-like protein 1 (181 aa).

G2 is lipidated: N-myristoyl glycine. GTP-binding positions include 24–31 (GLDGAGKT), 45–48 (TIPT), G70, 126–129 (NKQD), and 160–161 (AT). Residues T31 and T48 each contribute to the Mg(2+) site.

This sequence belongs to the small GTPase superfamily. Arf family. The GTP-bound form interacts with GOLGA1. The GTP-bound form interacts with GOLGA4 and RGPD8. The GTP-bound form directly interacts with ARFIP2. Binds to SCOC, preferentially in its GTP-bound form. May interact with UNC119. Interacts with ARFIP1; this interaction directs ARFIP1 to the trans-Golgi membranes. Interacts with ARFGEF1 (via N-terminus). As to expression, detected in heart, liver, lung and liver (at protein level). Detected in fetal heart, lung, liver and kidney. Detected in adult heart, placenta, lung, liver, skeletal muscle, kidney and pancreas.

The protein localises to the golgi apparatus membrane. It is found in the golgi apparatus. It localises to the trans-Golgi network membrane. The protein resides in the membrane. Its function is as follows. GTP-binding protein that recruits several effectors, such as golgins, arfaptins and Arf-GEFs to the trans-Golgi network, and modulates their functions at the Golgi complex. Plays thereby a role in a wide range of fundamental cellular processes, including cell polarity, innate immunity, or protein secretion mediated by arfaptins, which were shown to play a role in maintaining insulin secretion from pancreatic beta cells. The protein is ADP-ribosylation factor-like protein 1 (ARL1) of Homo sapiens (Human).